A 145-amino-acid polypeptide reads, in one-letter code: Putative pre-16S rRNA nuclease (145 aa).

The protein belongs to the YqgF nuclease family.

The protein localises to the cytoplasm. In terms of biological role, could be a nuclease involved in processing of the 5'-end of pre-16S rRNA. The sequence is that of Putative pre-16S rRNA nuclease from Pseudomonas fluorescens (strain Pf0-1).